The chain runs to 337 residues: DNA-directed RNA polymerase subunit alpha (337 aa).

Positions 1 to 233 (MVREDVVGST…DLLIPFLHAE (233 aa)) are alpha N-terminal domain (alpha-NTD). Residues 265–337 (KGIPLTCIFI…FAINLLNKKL (73 aa)) are alpha C-terminal domain (alpha-CTD).

This sequence belongs to the RNA polymerase alpha chain family. In terms of assembly, in plastids the minimal PEP RNA polymerase catalytic core is composed of four subunits: alpha, beta, beta', and beta''. When a (nuclear-encoded) sigma factor is associated with the core the holoenzyme is formed, which can initiate transcription.

It is found in the plastid. The protein resides in the chloroplast. The catalysed reaction is RNA(n) + a ribonucleoside 5'-triphosphate = RNA(n+1) + diphosphate. Its function is as follows. DNA-dependent RNA polymerase catalyzes the transcription of DNA into RNA using the four ribonucleoside triphosphates as substrates. The polypeptide is DNA-directed RNA polymerase subunit alpha (Phalaenopsis aphrodite subsp. formosana (Moth orchid)).